Reading from the N-terminus, the 292-residue chain is Shikimate dehydrogenase (NADP(+)) (292 aa).

Shikimate is bound by residues 22–24 (SLS) and serine 69. The active-site Proton acceptor is the lysine 73. Shikimate contacts are provided by asparagine 94 and aspartate 111. NADP(+)-binding positions include 135 to 139 (GVGGA) and isoleucine 236. Tyrosine 238 is a shikimate binding site. An NADP(+)-binding site is contributed by glycine 260.

Belongs to the shikimate dehydrogenase family. Homodimer.

It catalyses the reaction shikimate + NADP(+) = 3-dehydroshikimate + NADPH + H(+). It functions in the pathway metabolic intermediate biosynthesis; chorismate biosynthesis; chorismate from D-erythrose 4-phosphate and phosphoenolpyruvate: step 4/7. Involved in the biosynthesis of the chorismate, which leads to the biosynthesis of aromatic amino acids. Catalyzes the reversible NADPH linked reduction of 3-dehydroshikimate (DHSA) to yield shikimate (SA). This chain is Shikimate dehydrogenase (NADP(+)), found in Streptococcus pyogenes serotype M2 (strain MGAS10270).